The sequence spans 385 residues: Exopolygalacturonase rpg16 (385 aa).

The N-terminal stretch at Met-1–Thr-26 is a signal peptide. 4 N-linked (GlcNAc...) asparagine glycosylation sites follow: Asn-143, Asn-161, Asn-164, and Asn-180. One copy of the PbH1 1 repeat lies at Ser-165–His-195. The active-site Proton donor is Asp-210. The cysteines at positions 212 and 229 are disulfide-linked. N-linked (GlcNAc...) asparagine glycosylation is found at Asn-218 and Asn-226. 3 PbH1 repeats span residues Val-219–Gly-241, Val-249–Thr-270, and Val-278–Thr-299. His-233 is an active-site residue. N-linked (GlcNAc...) asparagine glycans are attached at residues Asn-256, Asn-282, and Asn-343. An intrachain disulfide couples Cys-344 to Cys-350. The stretch at Cys-350–Gly-376 is one PbH1 5 repeat. N-linked (GlcNAc...) asparagine glycosylation is found at Asn-359 and Asn-365.

It belongs to the glycosyl hydrolase 28 family. Post-translationally, N-glycosylated.

Its subcellular location is the secreted. It carries out the reaction [(1-&gt;4)-alpha-D-galacturonosyl](n) + H2O = alpha-D-galacturonate + [(1-&gt;4)-alpha-D-galacturonosyl](n-1). In terms of biological role, specific in hydrolyzing the terminal glycosidic bond of polygalacturonic acid and oligogalacturonates. This is Exopolygalacturonase rpg16 from Rhizopus delemar (strain RA 99-880 / ATCC MYA-4621 / FGSC 9543 / NRRL 43880) (Mucormycosis agent).